The sequence spans 134 residues: Protein dpy-30 homolog (134 aa).

Residues 1 to 81 (MEAKTDAPIS…ETNNMPTRQY (81 aa)) are disordered. Low complexity predominate over residues 31–68 (AQANPTAAPGAPPSGAIAVGQSTNPVAQQQQQPAVAKK). A compositionally biased stretch (polar residues) spans 71 to 81 (SETNNMPTRQY).

This sequence belongs to the dpy-30 family. Core component of several methyltransferase-containing complexes. Component of the SET1 complex, composed at least of the catalytic subunit Set1, wds/WDR5, Wdr82, Rbbp5, ash2, Cfp1/CXXC1, hcf and Dpy-30L1. Component of the MLL3/4 complex composed at least of the catalytic subunit trr, ash2, Rbbp5, Dpy-30L1, wds, hcf, ptip, Pa1, Utx, Lpt and Ncoa6. In terms of tissue distribution, expressed in larval brain, gonad, imaginal disk and salivary gland and in adult brain, testis, ovary and salivary gland.

It is found in the nucleus. In terms of biological role, component of the SET1 complex that specifically di- and trimethylates 'Lys-4' of histone H3 and of the MLL3/4 complex which also methylates histone H3 'Lys-4'. Inhibits MTF-1 transcription factor activity. This chain is Protein dpy-30 homolog, found in Drosophila melanogaster (Fruit fly).